The following is a 719-amino-acid chain: Photosystem I P700 chlorophyll a apoprotein A1 (719 aa).

8 helical membrane-spanning segments follow: residues isoleucine 60 to alanine 83, leucine 146 to histidine 169, leucine 185 to leucine 209, threonine 281 to tyrosine 299, tryptophan 336 to tyrosine 359, leucine 375 to valine 401, alanine 423 to histidine 445, and phenylalanine 521 to leucine 539. [4Fe-4S] cluster contacts are provided by cysteine 563 and cysteine 572. 2 consecutive transmembrane segments (helical) span residues histidine 579–tryptophan 600 and leucine 654–phenylalanine 676. A chlorophyll a'-binding site is contributed by histidine 665. Residues methionine 673 and tyrosine 681 each contribute to the chlorophyll a site. Tryptophan 682 contributes to the phylloquinone binding site. Residues alanine 714 to histidine 719 form a helical membrane-spanning segment.

Belongs to the PsaA/PsaB family. In terms of assembly, the PsaA/B heterodimer binds the P700 chlorophyll special pair and subsequent electron acceptors. PSI consists of a core antenna complex that captures photons, and an electron transfer chain that converts photonic excitation into a charge separation. The eukaryotic PSI reaction center is composed of at least 11 subunits. It depends on P700 is a chlorophyll a/chlorophyll a' dimer, A0 is one or more chlorophyll a, A1 is one or both phylloquinones and FX is a shared 4Fe-4S iron-sulfur center. as a cofactor.

The protein localises to the plastid. It localises to the chloroplast thylakoid membrane. The catalysed reaction is reduced [plastocyanin] + hnu + oxidized [2Fe-2S]-[ferredoxin] = oxidized [plastocyanin] + reduced [2Fe-2S]-[ferredoxin]. PsaA and PsaB bind P700, the primary electron donor of photosystem I (PSI), as well as the electron acceptors A0, A1 and FX. PSI is a plastocyanin-ferredoxin oxidoreductase, converting photonic excitation into a charge separation, which transfers an electron from the donor P700 chlorophyll pair to the spectroscopically characterized acceptors A0, A1, FX, FA and FB in turn. Oxidized P700 is reduced on the lumenal side of the thylakoid membrane by plastocyanin. The chain is Photosystem I P700 chlorophyll a apoprotein A1 from Equisetum palustre (Marsh horsetail).